Here is an 871-residue protein sequence, read N- to C-terminus: Alanine--tRNA ligase (871 aa).

His-590, His-594, Cys-694, and His-698 together coordinate Zn(2+).

Belongs to the class-II aminoacyl-tRNA synthetase family. Zn(2+) is required as a cofactor.

The protein localises to the cytoplasm. The enzyme catalyses tRNA(Ala) + L-alanine + ATP = L-alanyl-tRNA(Ala) + AMP + diphosphate. Catalyzes the attachment of alanine to tRNA(Ala) in a two-step reaction: alanine is first activated by ATP to form Ala-AMP and then transferred to the acceptor end of tRNA(Ala). Also edits incorrectly charged Ser-tRNA(Ala) and Gly-tRNA(Ala) via its editing domain. This chain is Alanine--tRNA ligase, found in Thermoplasma acidophilum (strain ATCC 25905 / DSM 1728 / JCM 9062 / NBRC 15155 / AMRC-C165).